Consider the following 281-residue polypeptide: Very long chain fatty acid elongase 7 (281 aa).

An N-acetylalanine modification is found at alanine 2. Residues 2 to 27 are Lumenal-facing; that stretch reads AFSDLTSRTVRLYDNWIKDADPRVED. The chain crosses the membrane as a helical span at residues 28–48; it reads WLLMSSPLPQTIILGFYVYFV. At 49–66 the chain is on the cytoplasmic side; it reads TSLGPKLMENRKPFELKK. The helical transmembrane segment at 67-87 threads the bilayer; that stretch reads VMITYNFSIVLFSVYMFYEFI. Residues 88-115 lie on the Lumenal side of the membrane; it reads MSGWGTGYSFRCDIVDYSQSPTALRMVR. Cysteine 99 and cysteine 231 are joined by a disulfide. The helical transmembrane segment at 116–136 threads the bilayer; that stretch reads TCWLYYFSKFIELLDTIFFIL. 3-oxoeicosanoyl-CoA contacts are provided by lysine 124, arginine 137, lysine 139, glutamine 142, and histidine 147. The Cytoplasmic portion of the chain corresponds to 137–142; the sequence is RKKNSQ. The helical transmembrane segment at 143 to 162 threads the bilayer; it reads VTFLHVFHHTIMPWTWWFGV. The HxxHH motif motif lies at 147 to 151; that stretch reads HVFHH. The active-site Nucleophile is the histidine 150. Residues 163-171 are Lumenal-facing; it reads KFAAGGLGT. Residues 172-194 traverse the membrane as a helical segment; the sequence is FHAFLNTAVHVVMYSYYGLCALG. 3-oxoeicosanoyl-CoA-binding residues include tyrosine 187, lysine 204, threonine 208, and glutamine 211. At 195 to 206 the chain is on the cytoplasmic side; it reads PDYQKYLWWKKY. A helical transmembrane segment spans residues 207–227; the sequence is LTSLQLIQFVLITIHISQFFF. The Lumenal portion of the chain corresponds to 228–236; that stretch reads MEDCKYQFP. A helical membrane pass occupies residues 237–257; sequence VFQYIIMSYGCIFLLLFLHFW. At 258-281 the chain is on the cytoplasmic side; the sequence is YRAYTKGQRLPKTVKHGICKNKDH. Residue arginine 266 participates in 3-oxoeicosanoyl-CoA binding. The Di-lysine motif signature appears at 277–281; the sequence is KNKDH.

Belongs to the ELO family. ELOVL7 subfamily. As to quaternary structure, homodimer. Interacts with TECR.

The protein resides in the endoplasmic reticulum membrane. It carries out the reaction a very-long-chain acyl-CoA + malonyl-CoA + H(+) = a very-long-chain 3-oxoacyl-CoA + CO2 + CoA. The catalysed reaction is eicosanoyl-CoA + malonyl-CoA + H(+) = 3-oxodocosanoyl-CoA + CO2 + CoA. It catalyses the reaction (5Z,8Z,11Z,14Z)-eicosatetraenoyl-CoA + malonyl-CoA + H(+) = (7Z,10Z,13Z,16Z)-3-oxodocosatetraenoyl-CoA + CO2 + CoA. The enzyme catalyses (6Z,9Z,12Z)-octadecatrienoyl-CoA + malonyl-CoA + H(+) = (8Z,11Z,14Z)-3-oxoeicosatrienoyl-CoA + CO2 + CoA. It carries out the reaction (9Z,12Z)-octadecadienoyl-CoA + malonyl-CoA + H(+) = (11Z,14Z)-3-oxoicosa-11,14-dienoyl-CoA + CO2 + CoA. The catalysed reaction is (9Z)-octadecenoyl-CoA + malonyl-CoA + H(+) = 3-oxo-(11Z)-eicosenoyl-CoA + CO2 + CoA. It catalyses the reaction octadecanoyl-CoA + malonyl-CoA + H(+) = 3-oxoeicosanoyl-CoA + CO2 + CoA. The enzyme catalyses hexadecanoyl-CoA + malonyl-CoA + H(+) = 3-oxooctadecanoyl-CoA + CO2 + CoA. It carries out the reaction (9Z,12Z,15Z)-octadecatrienoyl-CoA + malonyl-CoA + H(+) = (11Z,14Z,17Z)-3-oxoeicosatrienoyl-CoA + CO2 + CoA. It functions in the pathway lipid metabolism; fatty acid biosynthesis. Catalyzes the first and rate-limiting reaction of the four reactions that constitute the long-chain fatty acids elongation cycle. This endoplasmic reticulum-bound enzymatic process allows the addition of 2 carbons to the chain of long- and very long-chain fatty acids (VLCFAs) per cycle. Condensing enzyme with higher activity toward C18 acyl-CoAs, especially C18:3(n-3) acyl-CoAs and C18:3(n-6)-CoAs. Also active toward C20:4-, C18:0-, C18:1-, C18:2- and C16:0-CoAs, and weakly toward C20:0-CoA. Little or no activity toward C22:0-, C24:0-, or C26:0-CoAs. May participate in the production of saturated and polyunsaturated VLCFAs of different chain lengths that are involved in multiple biological processes as precursors of membrane lipids and lipid mediators. The chain is Very long chain fatty acid elongase 7 from Bos taurus (Bovine).